We begin with the raw amino-acid sequence, 521 residues long: Type-1 glutamine synthetase 2 (521 aa).

A GS beta-grasp domain is found at 76 to 176; that stretch reads NQIKISKSPF…FLMDFIGTNG (101 aa). In terms of domain architecture, GS catalytic spans 183 to 521; sequence PRSTLKKVIK…WELERYLEII (339 aa).

Belongs to the glutamine synthetase family.

It carries out the reaction L-glutamate + NH4(+) + ATP = L-glutamine + ADP + phosphate + H(+). In Dictyostelium discoideum (Social amoeba), this protein is Type-1 glutamine synthetase 2 (glnA2).